The sequence spans 261 residues: Serine acetyltransferase (261 aa).

This sequence belongs to the transferase hexapeptide repeat family.

Its subcellular location is the cytoplasm. It carries out the reaction L-serine + acetyl-CoA = O-acetyl-L-serine + CoA. The protein operates within amino-acid biosynthesis; L-cysteine biosynthesis; L-cysteine from L-serine: step 1/2. In Buchnera aphidicola subsp. Schizaphis graminum (strain Sg), this protein is Serine acetyltransferase (cysE).